The chain runs to 68 residues: MDARLLEILVCPICKGPLHYDRGAQELVCHADKLAYPIRDGIPVMLVDEARQTVEGTPVDPAGPARGR.

It belongs to the UPF0434 family.

This is UPF0434 protein BMA10229_A1047 from Burkholderia mallei (strain NCTC 10229).